A 68-amino-acid chain; its full sequence is Sec-independent protein translocase protein TatA (68 aa).

Residues methionine 1–glycine 21 traverse the membrane as a helical segment. The disordered stretch occupies residues glycine 42–lysine 68. The segment covering aspartate 56–lysine 68 has biased composition (basic and acidic residues).

The protein belongs to the TatA/E family. The Tat system comprises two distinct complexes: a TatABC complex, containing multiple copies of TatA, TatB and TatC subunits, and a separate TatA complex, containing only TatA subunits. Substrates initially bind to the TatABC complex, which probably triggers association of the separate TatA complex to form the active translocon.

Its subcellular location is the cell inner membrane. In terms of biological role, part of the twin-arginine translocation (Tat) system that transports large folded proteins containing a characteristic twin-arginine motif in their signal peptide across membranes. TatA could form the protein-conducting channel of the Tat system. This Chromobacterium violaceum (strain ATCC 12472 / DSM 30191 / JCM 1249 / CCUG 213 / NBRC 12614 / NCIMB 9131 / NCTC 9757 / MK) protein is Sec-independent protein translocase protein TatA.